The primary structure comprises 500 residues: Glycerol kinase (500 aa).

ADP is bound at residue threonine 12. ATP contacts are provided by threonine 12, threonine 13, and serine 14. Residue threonine 12 participates in sn-glycerol 3-phosphate binding. Arginine 16 provides a ligand contact to ADP. Sn-glycerol 3-phosphate is bound by residues arginine 82, glutamate 83, tyrosine 135, and aspartate 245. Arginine 82, glutamate 83, tyrosine 135, aspartate 245, and glutamine 246 together coordinate glycerol. ADP-binding residues include threonine 267 and glycine 310. ATP-binding residues include threonine 267, glycine 310, glutamine 314, and glycine 411. ADP contacts are provided by glycine 411 and asparagine 415.

It belongs to the FGGY kinase family. As to quaternary structure, homotetramer and homodimer (in equilibrium).

It catalyses the reaction glycerol + ATP = sn-glycerol 3-phosphate + ADP + H(+). It functions in the pathway polyol metabolism; glycerol degradation via glycerol kinase pathway; sn-glycerol 3-phosphate from glycerol: step 1/1. Its activity is regulated as follows. Activated by phosphorylation and inhibited by fructose 1,6-bisphosphate (FBP). Its function is as follows. Key enzyme in the regulation of glycerol uptake and metabolism. Catalyzes the phosphorylation of glycerol to yield sn-glycerol 3-phosphate. This is Glycerol kinase from Clostridium perfringens (strain SM101 / Type A).